Here is a 287-residue protein sequence, read N- to C-terminus: Diaminopimelate epimerase (287 aa).

Residues Asn-13, Gln-46, and Asn-66 each coordinate substrate. Cys-75 acts as the Proton donor in catalysis. Residues 76–77 (GN), Asn-166, Asn-199, and 217–218 (ER) contribute to the substrate site. Cys-226 (proton acceptor) is an active-site residue. Residue 227–228 (GT) participates in substrate binding.

It belongs to the diaminopimelate epimerase family. Homodimer.

The protein resides in the cytoplasm. The enzyme catalyses (2S,6S)-2,6-diaminopimelate = meso-2,6-diaminopimelate. It participates in amino-acid biosynthesis; L-lysine biosynthesis via DAP pathway; DL-2,6-diaminopimelate from LL-2,6-diaminopimelate: step 1/1. Functionally, catalyzes the stereoinversion of LL-2,6-diaminopimelate (L,L-DAP) to meso-diaminopimelate (meso-DAP), a precursor of L-lysine and an essential component of the bacterial peptidoglycan. The polypeptide is Diaminopimelate epimerase (Paraburkholderia xenovorans (strain LB400)).